Reading from the N-terminus, the 371-residue chain is Probable alcohol acetyltransferase (371 aa).

Active-site charge relay system residues include Ser-124 and His-295. A disordered region spans residues 325–352 (AKALEESPKESYSRPPAHQQPLHKNDFT). Positions 327–336 (ALEESPKESY) are enriched in basic and acidic residues.

Belongs to the AB hydrolase superfamily.

In terms of biological role, probable alcohol acetyltransferase that uses acetyl-CoA to synthesize acetate esters from various alcohols. Not involved in the synthesis of ethyl acetate. The chain is Probable alcohol acetyltransferase (EAT2) from Cyberlindnera fabianii (Yeast).